The primary structure comprises 405 residues: Protein NCA1 (405 aa).

The segment at 1-85 (MTTTSVCPFS…GNLNKDSTDS (85 aa)) is disordered. 2 stretches are compositionally biased toward basic and acidic residues: residues 13-24 (ARPDDGSTRKQG) and 37-48 (ARPDDASARKQG). The segment covering 76–85 (GNLNKDSTDS) has biased composition (polar residues). Residues 108–142 (CMLCQALLYESSRCVPCTHVFCKVCLTRFKDCPLC) form an RING-type zinc finger. TPR repeat units follow at residues 247 to 280 (GAVL…LMKL) and 292 to 325 (SVSL…RRDA).

As to quaternary structure, interacts with the catalases CAT1, CAT2 and CAT3. This interaction is not induced by alkaline stress or H(2)O(2) and NaCl treatments. Expressed in roots, stems, leaves, flowers and siliques.

It localises to the cytoplasm. Its subcellular location is the nucleus. In terms of biological role, has holdase chaperone activity that may fold catalase to a functional structure. Not required for the peroxisome import of catalases. Required for the activity of catalases and acts mainly at the post-transcriptional level. The chain is Protein NCA1 from Arabidopsis thaliana (Mouse-ear cress).